The following is a 448-amino-acid chain: Ribosomal protein uS12 methylthiotransferase RimO (448 aa).

One can recognise an MTTase N-terminal domain in the interval 7–123 (EKVSLVSLGC…IAEIIAEKKQ (117 aa)). Residues cysteine 16, cysteine 52, cysteine 86, cysteine 161, cysteine 165, and cysteine 168 each coordinate [4Fe-4S] cluster. The 231-residue stretch at 147–377 (SSPHYTAYLK…MRTQARVSFK (231 aa)) folds into the Radical SAM core domain. The TRAM domain occupies 380 to 448 (RTLVDSEEDV…DYDLIGEIVD (69 aa)).

This sequence belongs to the methylthiotransferase family. RimO subfamily. Requires [4Fe-4S] cluster as cofactor.

It localises to the cytoplasm. The enzyme catalyses L-aspartate(89)-[ribosomal protein uS12]-hydrogen + (sulfur carrier)-SH + AH2 + 2 S-adenosyl-L-methionine = 3-methylsulfanyl-L-aspartate(89)-[ribosomal protein uS12]-hydrogen + (sulfur carrier)-H + 5'-deoxyadenosine + L-methionine + A + S-adenosyl-L-homocysteine + 2 H(+). Its function is as follows. Catalyzes the methylthiolation of an aspartic acid residue of ribosomal protein uS12. This chain is Ribosomal protein uS12 methylthiotransferase RimO, found in Citrifermentans bemidjiense (strain ATCC BAA-1014 / DSM 16622 / JCM 12645 / Bem) (Geobacter bemidjiensis).